The chain runs to 156 residues: MSRRTRAQKRPTAPDPVYNNVLVNMLIQRVMRNGKKSLASRIVYEAMKTVQERTGEDALQIFERAVKNATPLVEVKARRVGGATYQVPMEVRPDRGISLALRWLVQFSRKRAGRSMSAKLANELMDAANETGSTIRKREETHKMAEANKAFAHYRY.

It belongs to the universal ribosomal protein uS7 family. Part of the 30S ribosomal subunit. Contacts proteins S9 and S11.

One of the primary rRNA binding proteins, it binds directly to 16S rRNA where it nucleates assembly of the head domain of the 30S subunit. Is located at the subunit interface close to the decoding center, probably blocks exit of the E-site tRNA. This is Small ribosomal subunit protein uS7 from Thermosynechococcus vestitus (strain NIES-2133 / IAM M-273 / BP-1).